The following is a 50-amino-acid chain: C-C motif chemokine 5 (50 aa).

This sequence belongs to the intercrine beta (chemokine CC) family.

It localises to the secreted. In terms of biological role, chemoattractant for blood monocytes, memory T-helper cells and eosinophils. Causes the release of histamine from basophils and activates eosinophils. May activate several chemokine receptors including CCR1, CCR3, CCR4 and CCR5. May also be an agonist of the G protein-coupled receptor GPR75. Together with GPR75, may play a role in neuron survival through activation of a downstream signaling pathway involving the PI3, Akt and MAP kinases. By activating GPR75 may also play a role in insulin secretion by islet cells. This chain is C-C motif chemokine 5 (CCL5), found in Sus scrofa (Pig).